A 332-amino-acid polypeptide reads, in one-letter code: GLIPR1-like protein 2 (332 aa).

In terms of domain architecture, SCP spans 57–191 (LHNELRGTVF…THAALFICNY (135 aa)). An N-linked (GlcNAc...) asparagine glycan is attached at Asn145. Residues 253-273 (IFILFLRVASLLLCVIVVLIV) traverse the membrane as a helical segment. The disordered stretch occupies residues 293 to 332 (EGKTEVEIVMEEGEGEGEGGEGEGEGEEKEEEEMLEEDEQ). Over residues 300 to 332 (IVMEEGEGEGEGGEGEGEGEEKEEEEMLEEDEQ) the composition is skewed to acidic residues.

The protein belongs to the CRISP family.

Its subcellular location is the membrane. This Mus musculus (Mouse) protein is GLIPR1-like protein 2 (Glipr1l2).